The following is a 766-amino-acid chain: Phosphoribosylformylglycinamidine synthase subunit PurL (766 aa).

H66 is a catalytic residue. Residues Y69 and K113 each contribute to the ATP site. Residue E115 coordinates Mg(2+). Substrate is bound by residues 116–119 (SHNH) and R138. H117 (proton acceptor) is an active-site residue. D139 is a Mg(2+) binding site. Residue Q264 coordinates substrate. D292 contacts Mg(2+). 336–338 (ESQ) is a binding site for substrate. ATP is bound by residues N524 and G561. N562 is a Mg(2+) binding site. S564 serves as a coordination point for substrate.

The protein belongs to the FGAMS family. Monomer. Part of the FGAM synthase complex composed of 1 PurL, 1 PurQ and 2 PurS subunits.

It is found in the cytoplasm. It catalyses the reaction N(2)-formyl-N(1)-(5-phospho-beta-D-ribosyl)glycinamide + L-glutamine + ATP + H2O = 2-formamido-N(1)-(5-O-phospho-beta-D-ribosyl)acetamidine + L-glutamate + ADP + phosphate + H(+). It participates in purine metabolism; IMP biosynthesis via de novo pathway; 5-amino-1-(5-phospho-D-ribosyl)imidazole from N(2)-formyl-N(1)-(5-phospho-D-ribosyl)glycinamide: step 1/2. Its function is as follows. Part of the phosphoribosylformylglycinamidine synthase complex involved in the purines biosynthetic pathway. Catalyzes the ATP-dependent conversion of formylglycinamide ribonucleotide (FGAR) and glutamine to yield formylglycinamidine ribonucleotide (FGAM) and glutamate. The FGAM synthase complex is composed of three subunits. PurQ produces an ammonia molecule by converting glutamine to glutamate. PurL transfers the ammonia molecule to FGAR to form FGAM in an ATP-dependent manner. PurS interacts with PurQ and PurL and is thought to assist in the transfer of the ammonia molecule from PurQ to PurL. The protein is Phosphoribosylformylglycinamidine synthase subunit PurL of Mycobacterium bovis (strain BCG / Pasteur 1173P2).